Here is a 72-residue protein sequence, read N- to C-terminus: DNA-directed RNA polymerase subunit omega (72 aa).

The protein belongs to the RNA polymerase subunit omega family. The RNAP catalytic core consists of 2 alpha, 1 beta, 1 beta' and 1 omega subunit. When a sigma factor is associated with the core the holoenzyme is formed, which can initiate transcription.

The enzyme catalyses RNA(n) + a ribonucleoside 5'-triphosphate = RNA(n+1) + diphosphate. In terms of biological role, promotes RNA polymerase assembly. Latches the N- and C-terminal regions of the beta' subunit thereby facilitating its interaction with the beta and alpha subunits. The chain is DNA-directed RNA polymerase subunit omega from Clostridium beijerinckii (strain ATCC 51743 / NCIMB 8052) (Clostridium acetobutylicum).